Reading from the N-terminus, the 90-residue chain is Probable Fe(2+)-trafficking protein (90 aa).

The protein belongs to the Fe(2+)-trafficking protein family.

Could be a mediator in iron transactions between iron acquisition and iron-requiring processes, such as synthesis and/or repair of Fe-S clusters in biosynthetic enzymes. This chain is Probable Fe(2+)-trafficking protein, found in Ectopseudomonas mendocina (strain ymp) (Pseudomonas mendocina).